The primary structure comprises 477 residues: PEP-dependent dihydroxyacetone kinase, phosphoryl donor subunit DhaM (477 aa).

The region spanning 1-135 (MIGLIIVSHS…QALQAKQQQL (135 aa)) is the PTS EIIA type-4 domain. Residue His-9 is the Tele-phosphohistidine intermediate of the active site. An HPr domain is found at 156–243 (ALTTQWVVKN…QLAQHNFGDN (88 aa)). His-170 serves as the catalytic Pros-phosphohistidine intermediate. Positions 269–477 (HAPNTELCIS…IETRSLIVAS (209 aa)) are PTS EI-like, N-terminal part. The active-site Tele-phosphohistidine intermediate is His-435.

It belongs to the PEP-utilizing enzyme family. In terms of assembly, homodimer. The dihydroxyacetone kinase complex is composed of a homodimer of DhaM, a homodimer of DhaK and the subunit DhaL.

It carries out the reaction dihydroxyacetone + phosphoenolpyruvate = dihydroxyacetone phosphate + pyruvate. Its function is as follows. Component of the dihydroxyacetone kinase complex, which is responsible for the phosphoenolpyruvate (PEP)-dependent phosphorylation of dihydroxyacetone. DhaM serves as the phosphoryl donor. Is phosphorylated by phosphoenolpyruvate in an EI- and HPr-dependent reaction, and a phosphorelay system on histidine residues finally leads to phosphoryl transfer to DhaL and dihydroxyacetone. The chain is PEP-dependent dihydroxyacetone kinase, phosphoryl donor subunit DhaM from Providencia stuartii (strain MRSN 2154).